The chain runs to 343 residues: Cilia- and flagella-associated protein 36 (343 aa).

Phosphoserine is present on residues Ser85 and Ser147. Positions 147-181 form a coiled coil; the sequence is SDLEQEEMKILREVLRKSKEEYDQEEERKRKKQSS. The segment at 165–191 is disordered; that stretch reads KEEYDQEEERKRKKQSSEGKMEEPPIY. A Phosphoserine modification is found at Ser201. Residues 286 to 323 are disordered; sequence SMRKDMRAKQIQNTEQKGKPTREAEEMTEKPEMTAEEK. The segment covering 301 to 323 has biased composition (basic and acidic residues); sequence QKGKPTREAEEMTEKPEMTAEEK.

Belongs to the CFAP36 family. Interacts with ARL3. As to expression, widely expressed (at protein level).

It localises to the nucleus. It is found in the cytoplasm. The protein localises to the cell projection. Its subcellular location is the cilium. The protein resides in the flagellum. Its function is as follows. May act as an effector for ARL3. The polypeptide is Cilia- and flagella-associated protein 36 (Rattus norvegicus (Rat)).